The sequence spans 2261 residues: Phospholipid-transporting ATPase ABCA1 (2261 aa).

The S-palmitoyl cysteine moiety is linked to residue C3. Residue N14 is glycosylated (N-linked (GlcNAc...) asparagine). A helical membrane pass occupies residues 22 to 42; that stretch reads TCQLLLEVAWPLFIFLILISV. C23 carries S-palmitoyl cysteine lipidation. Residues 43–639 are Extracellular-facing; it reads RLSYPPYEQH…DIFLRVMSRS (597 aa). The annulus domain 1 stretch occupies residues 69–80; sequence WVQGIICNANNP. C75 and C309 are disulfide-bonded. 8 N-linked (GlcNAc...) asparagine glycosylation sites follow: N98, N151, N161, N196, N244, N292, N337, and N349. Positions 368-379 are annulus domain 2; that stretch reads SRIIWKALKPLL. Residues N400, N478, N489, and N521 are each glycosylated (N-linked (GlcNAc...) asparagine). The gateway domain stretch occupies residues 564 to 594; that stretch reads ERTNKIKDGYWDPGPRADPFEDMRYVWGGFA. 5 helical membrane passes run 640 to 660, 683 to 703, 716 to 736, 745 to 765, and 777 to 797; these read MPLF…KSIV, FSWF…LVVI, SVVF…CFLI, LAAA…VLCV, and IFAS…FALF. N820 carries an N-linked (GlcNAc...) asparagine glycan. A helical membrane pass occupies residues 827-847; the sequence is MMLFDTFLYGVMTWYIEAVFP. An ABC transporter 1 domain is found at 899-1131; that stretch reads VSIQNLVKVY…LGTGYYLTLV (233 aa). 933 to 940 serves as a coordination point for ATP; that stretch reads GHNGAGKT. A helical membrane pass occupies residues 941 to 961; the sequence is TTMSILTGLFPPTSGTAYILG. S1042 is modified (phosphoserine; by PKA). Residues C1110 and C1111 are each lipidated (S-palmitoyl cysteine). Residues N1144 and N1294 are each glycosylated (N-linked (GlcNAc...) asparagine). Residues 1285 to 1310 form a disordered region; it reads FTEDDAVDPNDSDIDPESRETDLLSG. Residues 1287-1299 show a composition bias toward acidic residues; it reads EDDAVDPNDSDID. At S1296 the chain carries Phosphoserine. A helical membrane pass occupies residues 1351–1371; it reads IVLPAVFVCIALVFSLIVPPF. Over 1372 to 1656 the chain is Extracellular; it reads GKYPSLELQP…ALMTTSVDVL (285 aa). N1453 carries an N-linked (GlcNAc...) asparagine glycan. C1463 and C1477 are disulfide-bonded. 3 N-linked (GlcNAc...) asparagine glycosylation sites follow: N1499, N1504, and N1637. 6 helical membrane passes run 1657 to 1677, 1703 to 1723, 1735 to 1755, 1768 to 1788, 1802 to 1822, and 1852 to 1872; these read VSIC…VFLI, FVWD…IFIC, LPVL…LMYP, VVLT…TFVL, ILKS…LIDM, and NLFA…LIQY. An ABC transporter 2 domain is found at 1912–2144; sequence LEIKELTKIY…FGDGYTIVVR (233 aa). 1946-1953 is a binding site for ATP; it reads GVNGAGKS. An N-linked (GlcNAc...) asparagine glycan is attached at N2044. Phosphoserine; by PKA is present on S2054. N2238 carries N-linked (GlcNAc...) asparagine glycosylation.

It belongs to the ABC transporter superfamily. ABCA family. Interacts with MEGF10. May interact with APOE1; functionally associated with APOE1 in the biogenesis of HDLs. Interacts with ABCA8; this interaction potentiates cholesterol efflux. Interacts with ABCA12 and NR1H2; this interaction is required for ABCA1 localization to the cell surface and is necessary for its normal activity and stability. Post-translationally, phosphorylation on Ser-2054 regulates phospholipid efflux. Palmitoylated by ZDHHC8. Palmitoylation is essential for localization to the plasma membrane. In terms of tissue distribution, widely expressed in adult tissues. Highest levels are found in pregnant uterus and uterus.

It localises to the cell membrane. It is found in the endosome. It catalyses the reaction ATP + H2O + phospholipidSide 1 = ADP + phosphate + phospholipidSide 2.. It carries out the reaction a 1,2-diacyl-sn-glycero-3-phosphocholine(out) + ATP + H2O = a 1,2-diacyl-sn-glycero-3-phosphocholine(in) + ADP + phosphate + H(+). The catalysed reaction is a 1,2-diacyl-sn-glycero-3-phospho-L-serine(out) + ATP + H2O = a 1,2-diacyl-sn-glycero-3-phospho-L-serine(in) + ADP + phosphate + H(+). The enzyme catalyses a sphingomyelin(in) + ATP + H2O = a sphingomyelin(out) + ADP + phosphate + H(+). It catalyses the reaction cholesterol(in) + ATP + H2O = cholesterol(out) + ADP + phosphate + H(+). Its activity is regulated as follows. ATPase activity is decreased by cholesterol and ceramide. ATPase activity is stimulated by phosphatidylcholine and to a lesser degree by phosphatidylserine and sphingomyelin. Phospholipid translocase activity is highly reduced by berylium fluoride and aluminum flouride and reduced by N-ethylmaleimide. Its function is as follows. Catalyzes the translocation of specific phospholipids from the cytoplasmic to the extracellular/lumenal leaflet of membrane coupled to the hydrolysis of ATP. Thereby, participates in phospholipid transfer to apolipoproteins to form nascent high density lipoproteins/HDLs. Transports preferentially phosphatidylcholine over phosphatidylserine. May play a similar role in the efflux of intracellular cholesterol to apolipoproteins and the formation of nascent high density lipoproteins/HDLs. Translocates phospholipids from the outer face of the plasma membrane and forces it through its gateway and annulus into an elongated hydrophobic tunnel in its extracellular domain. This is Phospholipid-transporting ATPase ABCA1 from Mus musculus (Mouse).